The sequence spans 511 residues: 2-isopropylmalate synthase (511 aa).

Positions 5 to 267 (LIIFDTTLRD…DTDINATHIL (263 aa)) constitute a Pyruvate carboxyltransferase domain. Positions 14, 202, 204, and 238 each coordinate Mn(2+). The tract at residues 392-511 (KLVSLKVCTE…ATNKAQHPQI (120 aa)) is regulatory domain.

This sequence belongs to the alpha-IPM synthase/homocitrate synthase family. LeuA type 1 subfamily. In terms of assembly, homodimer. It depends on Mn(2+) as a cofactor.

The protein resides in the cytoplasm. It catalyses the reaction 3-methyl-2-oxobutanoate + acetyl-CoA + H2O = (2S)-2-isopropylmalate + CoA + H(+). It participates in amino-acid biosynthesis; L-leucine biosynthesis; L-leucine from 3-methyl-2-oxobutanoate: step 1/4. Catalyzes the condensation of the acetyl group of acetyl-CoA with 3-methyl-2-oxobutanoate (2-ketoisovalerate) to form 3-carboxy-3-hydroxy-4-methylpentanoate (2-isopropylmalate). In Ruthia magnifica subsp. Calyptogena magnifica, this protein is 2-isopropylmalate synthase.